The sequence spans 1157 residues: Endo-1,4-beta-xylanase A (1157 aa).

A signal peptide spans 1–33 (MMKNNVDRIVSIVTALIMIFGASLFSPPIRVFA). CBM-cenC domains are found at residues 38 to 189 (INLV…VTTQ) and 195 to 343 (GNVI…VIGE). The 324-residue stretch at 352–675 (QNDIPDLYSV…KPAFWAVVDP (324 aa)) folds into the GH10 domain. Glutamate 495 functions as the Proton donor in the catalytic mechanism. Aspartate 537 is a catalytic residue. Glutamate 600 serves as the catalytic Nucleophile. SLH domains are found at residues 1051–1114 (KKGV…YSGE) and 1115–1157 (FSDV…EMTQ).

This sequence belongs to the glycosyl hydrolase 10 (cellulase F) family.

It catalyses the reaction Endohydrolysis of (1-&gt;4)-beta-D-xylosidic linkages in xylans.. The protein operates within glycan degradation; xylan degradation. Its function is as follows. Endo-acting enzyme that randomly cleaves the internal xylosidic linkages of the xylan backbone, yielding xylooligosaccharides of various lengths which are further hydrolyzed to xylose molecules by beta-xylosidase (EC 3.2.1.37). Requires at least three xylose residues for catalytic activity. Does not have activity against xylobiose. The chain is Endo-1,4-beta-xylanase A (xynA) from Thermoanaerobacterium saccharolyticum.